The chain runs to 193 residues: Cytidylate kinase (193 aa).

Residue 12–20 (GLPGSGTTT) coordinates ATP.

The protein belongs to the cytidylate kinase family. Type 2 subfamily.

It localises to the cytoplasm. It catalyses the reaction CMP + ATP = CDP + ADP. It carries out the reaction dCMP + ATP = dCDP + ADP. The chain is Cytidylate kinase from Methanopyrus kandleri (strain AV19 / DSM 6324 / JCM 9639 / NBRC 100938).